The primary structure comprises 387 residues: Anhydro-N-acetylmuramic acid kinase (387 aa).

17 to 24 (GTSMDGVD) lines the ATP pocket.

This sequence belongs to the anhydro-N-acetylmuramic acid kinase family.

It carries out the reaction 1,6-anhydro-N-acetyl-beta-muramate + ATP + H2O = N-acetyl-D-muramate 6-phosphate + ADP + H(+). It functions in the pathway amino-sugar metabolism; 1,6-anhydro-N-acetylmuramate degradation. Its pathway is cell wall biogenesis; peptidoglycan recycling. Its function is as follows. Catalyzes the specific phosphorylation of 1,6-anhydro-N-acetylmuramic acid (anhMurNAc) with the simultaneous cleavage of the 1,6-anhydro ring, generating MurNAc-6-P. Is required for the utilization of anhMurNAc either imported from the medium or derived from its own cell wall murein, and thus plays a role in cell wall recycling. The protein is Anhydro-N-acetylmuramic acid kinase of Burkholderia pseudomallei (strain K96243).